A 141-amino-acid chain; its full sequence is LEKPKYRCPACRVPYCSVACFRKHKEQCNPETRPVEKKIRSALPTKTVKPVENKDDDDSIADFLNSDEEEDRVSLQNLKNLGESATLRSLLLNPHLRQLMVNLDQGEDKAKLMRAYMQEPLFVEFADCCLGIVEPSQNEES.

The HIT-type; degenerate zinc finger occupies 1–28 (LEKPKYRCPACRVPYCSVACFRKHKEQC). Cys-8, Cys-11, His-24, and Cys-28 together coordinate Zn(2+). Position 66 is a phosphoserine (Ser-66).

Thyroid receptor interacting proteins (TRIPs) specifically interact with the ligand binding domain of the thyroid receptor (TR). Requires the presence of thyroid hormone for its interaction. Interacts with NUFIP1. Interacts (via HIT-type zinc finger) with the RUVBL1/RUVBL2 complex in the presence of ADP.

It localises to the cytoplasm. The protein resides in the nucleus. This chain is Zinc finger HIT domain-containing protein 3 (ZNHIT3), found in Pan troglodytes (Chimpanzee).